The following is a 440-amino-acid chain: Ribosomal protein uS12 methylthiotransferase RimO (440 aa).

One can recognise an MTTase N-terminal domain in the interval 5-115; sequence PTVGFVSLGC…VVNAVHEVVP (111 aa). [4Fe-4S] cluster is bound by residues Cys-14, Cys-50, Cys-79, Cys-148, Cys-152, and Cys-155. In terms of domain architecture, Radical SAM core spans 134 to 372; that stretch reads LTPRHYAYLK…MAHQQAISAA (239 aa). The TRAM domain maps to 375-440; sequence QLKVGKELDV…DEYDLWAEVI (66 aa).

Belongs to the methylthiotransferase family. RimO subfamily. It depends on [4Fe-4S] cluster as a cofactor.

It is found in the cytoplasm. It catalyses the reaction L-aspartate(89)-[ribosomal protein uS12]-hydrogen + (sulfur carrier)-SH + AH2 + 2 S-adenosyl-L-methionine = 3-methylsulfanyl-L-aspartate(89)-[ribosomal protein uS12]-hydrogen + (sulfur carrier)-H + 5'-deoxyadenosine + L-methionine + A + S-adenosyl-L-homocysteine + 2 H(+). Its function is as follows. Catalyzes the methylthiolation of an aspartic acid residue of ribosomal protein uS12. The chain is Ribosomal protein uS12 methylthiotransferase RimO from Stutzerimonas stutzeri (strain A1501) (Pseudomonas stutzeri).